Here is a 316-residue protein sequence, read N- to C-terminus: Biotin synthase (316 aa).

In terms of domain architecture, Radical SAM core spans 42-268 (LCGESVDLCT…INPTAYIRMA (227 aa)). [4Fe-4S] cluster contacts are provided by cysteine 60, cysteine 64, and cysteine 67. Positions 104, 136, 196, and 266 each coordinate [2Fe-2S] cluster.

It belongs to the radical SAM superfamily. Biotin synthase family. Homodimer. The cofactor is [4Fe-4S] cluster. [2Fe-2S] cluster is required as a cofactor.

It carries out the reaction (4R,5S)-dethiobiotin + (sulfur carrier)-SH + 2 reduced [2Fe-2S]-[ferredoxin] + 2 S-adenosyl-L-methionine = (sulfur carrier)-H + biotin + 2 5'-deoxyadenosine + 2 L-methionine + 2 oxidized [2Fe-2S]-[ferredoxin]. It participates in cofactor biosynthesis; biotin biosynthesis; biotin from 7,8-diaminononanoate: step 2/2. Functionally, catalyzes the conversion of dethiobiotin (DTB) to biotin by the insertion of a sulfur atom into dethiobiotin via a radical-based mechanism. This chain is Biotin synthase, found in Clostridium beijerinckii (strain ATCC 51743 / NCIMB 8052) (Clostridium acetobutylicum).